We begin with the raw amino-acid sequence, 271 residues long: MLPTVFIVSDGTGITAETFAHSILSQFDQKFRLVRVPFIDSIEKAYDTVRKINDAAQHDGRRPIVFTTLVDGESNEIVKRSNALVLDMFQRFVEPLEQELQLKSSHAMGRVHQNADTEEYKTRIEAINFSLAHDDGQSNRNLADADVILIGVSRSGKTPTSLYLAMQYGVKAANYPLIPEDFERGKLPTPLHPHRDKLFGLSIDPMRLSEIRNERRPGSKYAAPENCRYEINEAEAMMRREGVKWLSSTHKSIEEIATTILQEIKLERQSY.

151-158 (GVSRSGKT) lines the ADP pocket.

It belongs to the pyruvate, phosphate/water dikinase regulatory protein family. PSRP subfamily.

The catalysed reaction is [pyruvate, water dikinase] + ADP = [pyruvate, water dikinase]-phosphate + AMP + H(+). It carries out the reaction [pyruvate, water dikinase]-phosphate + phosphate + H(+) = [pyruvate, water dikinase] + diphosphate. Bifunctional serine/threonine kinase and phosphorylase involved in the regulation of the phosphoenolpyruvate synthase (PEPS) by catalyzing its phosphorylation/dephosphorylation. The protein is Putative phosphoenolpyruvate synthase regulatory protein of Burkholderia mallei (strain NCTC 10247).